The following is a 557-amino-acid chain: NAD(P)H-quinone oxidoreductase chain 4 (557 aa).

The next 14 membrane-spanning stretches (helical) occupy residues 25-45, 57-77, 111-131, 133-153, 157-177, 189-209, 230-250, 264-284, 298-318, 327-347, 353-373, 397-417, 438-458, and 485-505; these read FPWLSLSILFPIAGSLLVPFI, YALFIALTTFLITVGAYLKGF, LILLTSFITALAVLAAWPVSF, PKLFFFLILAMDGGQIAVFAV, LLFFLAWELELLPVYLLLAIW, FIIYTAGSSLFILLAGLAMGF, GFQLLCYGGLLIAFGVKLPIV, TAPVHMLLAGILLKMGGYALL, FAPLLIVLGVVNIIYAALTSF, IAYSSISHMGFVLIGIGSFST, AMLQMISHGLIGASLFFLVGA, FALWTVCSLASLALPGMSGFV, IVIAGLAAIGVILTPIYLLSM, and IYIIGSLLVPIIGIGLYPRIM.

Belongs to the complex I subunit 4 family.

The protein resides in the cellular thylakoid membrane. It catalyses the reaction a plastoquinone + NADH + (n+1) H(+)(in) = a plastoquinol + NAD(+) + n H(+)(out). The enzyme catalyses a plastoquinone + NADPH + (n+1) H(+)(in) = a plastoquinol + NADP(+) + n H(+)(out). In terms of biological role, NDH-1 shuttles electrons from NAD(P)H, via FMN and iron-sulfur (Fe-S) centers, to quinones in the respiratory chain. The immediate electron acceptor for the enzyme in this species is believed to be plastoquinone. Couples the redox reaction to proton translocation (for every two electrons transferred, four hydrogen ions are translocated across the cytoplasmic membrane), and thus conserves the redox energy in a proton gradient. This chain is NAD(P)H-quinone oxidoreductase chain 4, found in Prochlorococcus marinus (strain SARG / CCMP1375 / SS120).